We begin with the raw amino-acid sequence, 147 residues long: Probable disulfide formation protein (147 aa).

The chain crosses the membrane as a helical span at residues 9 to 28; that stretch reads NYSLYFAWLTALIATLGSLY. A disulfide bridge links Cys-38 with Cys-41. 2 helical membrane-spanning segments follow: residues 43 to 62 and 69 to 86; these read YQRV…AYRT and YALP…YQYL. An intrachain disulfide couples Cys-99 to Cys-106. A helical transmembrane segment spans residues 115 to 138; it reads GFITLPFLGMLATLIMSFFLIMAF.

This sequence belongs to the DsbB family. BdbC subfamily.

Its subcellular location is the cell inner membrane. Its function is as follows. Required for disulfide bond formation in some proteins. The polypeptide is Probable disulfide formation protein (Coxiella burnetii (strain CbuK_Q154) (Coxiella burnetii (strain Q154))).